The following is a 224-amino-acid chain: Octanoyl-[acyl-carrier-protein]:protein N-octanoyltransferase LIPT2, mitochondrial (224 aa).

Positions 37 to 217 constitute a BPL/LPL catalytic domain; the sequence is SNIPNTLLLC…AFTEQFNCTL (181 aa). Substrate is bound by residues 81–88, 147–149, and 160–162; these read RGGLITFH, AIG, and GLA. Cys178 (acyl-thioester intermediate) is an active-site residue.

Belongs to the LipB family.

It localises to the mitochondrion. The catalysed reaction is octanoyl-[ACP] + L-lysyl-[protein] = N(6)-octanoyl-L-lysyl-[protein] + holo-[ACP] + H(+). It functions in the pathway protein modification; protein lipoylation via endogenous pathway; protein N(6)-(lipoyl)lysine from octanoyl-[acyl-carrier-protein]: step 1/2. Its function is as follows. Catalyzes the transfer of endogenously produced octanoic acid from octanoyl-acyl-carrier-protein (octanoyl-ACP) onto the lipoyl domains of lipoate-dependent enzymes such as the protein H of the glycine cleavage system (GCSH). Lipoyl-ACP can also act as a substrate although octanoyl-ACP is likely to be the physiological substrate. The chain is Octanoyl-[acyl-carrier-protein]:protein N-octanoyltransferase LIPT2, mitochondrial (lipt2) from Danio rerio (Zebrafish).